A 228-amino-acid polypeptide reads, in one-letter code: Cytidylate kinase (228 aa).

Position 10 to 18 (10 to 18 (GPSGSGKGT)) interacts with ATP.

Belongs to the cytidylate kinase family. Type 1 subfamily.

It localises to the cytoplasm. It catalyses the reaction CMP + ATP = CDP + ADP. The catalysed reaction is dCMP + ATP = dCDP + ADP. The protein is Cytidylate kinase of Acinetobacter baumannii (strain ACICU).